The chain runs to 205 residues: MIGRLRGVLVEKQAPEILIDVNGVGYELQMPLTSFYELPEVNHETMVYTHFVVREDAQLLYGFITKQERALFRLLIKTNGVGPKLALTILSGMTAGEFVGCVERDDIVTLVKLPGVGKKTAERLLVEMRDKLKSLMEASAGSEREFVLQSNYSPAPTVNSAEEDAISALISLGYKPPQASKSVSAAYKEGMDSETLIKAALKSML.

A domain I region spans residues 1–64 (MIGRLRGVLV…EDAQLLYGFI (64 aa)). Residues 65 to 143 (TKQERALFRL…SLMEASAGSE (79 aa)) are domain II. The flexible linker stretch occupies residues 144 to 156 (REFVLQSNYSPAP). A domain III region spans residues 157–205 (TVNSAEEDAISALISLGYKPPQASKSVSAAYKEGMDSETLIKAALKSML).

It belongs to the RuvA family. In terms of assembly, homotetramer. Forms an RuvA(8)-RuvB(12)-Holliday junction (HJ) complex. HJ DNA is sandwiched between 2 RuvA tetramers; dsDNA enters through RuvA and exits via RuvB. An RuvB hexamer assembles on each DNA strand where it exits the tetramer. Each RuvB hexamer is contacted by two RuvA subunits (via domain III) on 2 adjacent RuvB subunits; this complex drives branch migration. In the full resolvosome a probable DNA-RuvA(4)-RuvB(12)-RuvC(2) complex forms which resolves the HJ.

It localises to the cytoplasm. Its function is as follows. The RuvA-RuvB-RuvC complex processes Holliday junction (HJ) DNA during genetic recombination and DNA repair, while the RuvA-RuvB complex plays an important role in the rescue of blocked DNA replication forks via replication fork reversal (RFR). RuvA specifically binds to HJ cruciform DNA, conferring on it an open structure. The RuvB hexamer acts as an ATP-dependent pump, pulling dsDNA into and through the RuvAB complex. HJ branch migration allows RuvC to scan DNA until it finds its consensus sequence, where it cleaves and resolves the cruciform DNA. The polypeptide is Holliday junction branch migration complex subunit RuvA (Shewanella baltica (strain OS223)).